A 437-amino-acid polypeptide reads, in one-letter code: Elongation factor 1-gamma (437 aa).

N-acetylalanine is present on Ala-2. The 86-residue stretch at 2-87 (AAGTLYTYPE…YVSNEELRGS (86 aa)) folds into the GST N-terminal domain. The GST C-terminal domain occupies 88–216 (TPEAAAQVVQ…VKLCEKMAQF (129 aa)). An N6-acetyllysine mark is found at Lys-147 and Lys-212. The segment covering 221–254 (FAESQPKKDTPRKEKGSREEKQKPQAERKEEKKA) has biased composition (basic and acidic residues). Residues 221-268 (FAESQPKKDTPRKEKGSREEKQKPQAERKEEKKAAAPAPEEEMDECEQ) are disordered. Residue Lys-253 forms a Glycyl lysine isopeptide (Lys-Gly) (interchain with G-Cter in SUMO1) linkage. The EF-1-gamma C-terminal domain maps to 276-437 (AKDPFAHLPK…KAVNQGKIFK (162 aa)). Lys-285 is covalently cross-linked (Glycyl lysine isopeptide (Lys-Gly) (interchain with G-Cter in SUMO2)). Residue Lys-401 is modified to N6-acetyllysine. Lys-434 bears the N6-acetyllysine; alternate mark. At Lys-434 the chain carries N6-malonyllysine; alternate.

As to quaternary structure, EF-1 is composed of four subunits: alpha, beta, delta, and gamma.

In terms of biological role, probably plays a role in anchoring the complex to other cellular components. The polypeptide is Elongation factor 1-gamma (Eef1g) (Mus musculus (Mouse)).